Reading from the N-terminus, the 334-residue chain is Formamidase (334 aa).

Positions 14–260 (FLVAAIQFPV…WEIVTGEIYP (247 aa)) constitute a CN hydrolase domain. The active-site Proton acceptor is Glu-60. Lys-133 acts as the Proton donor in catalysis. The active-site Nucleophile is the Cys-166.

This sequence belongs to the carbon-nitrogen hydrolase superfamily. Aliphatic amidase family.

The enzyme catalyses formamide + H2O = formate + NH4(+). In terms of biological role, is an aliphatic amidase with a restricted substrate specificity, as it only hydrolyzes formamide. The chain is Formamidase from Helicobacter pylori (strain J99 / ATCC 700824) (Campylobacter pylori J99).